A 243-amino-acid chain; its full sequence is CTD nuclear envelope phosphatase 1 homolog (243 aa).

The helical transmembrane segment at 11 to 27 threads the bilayer; that stretch reads ALLLLLSKVWTCICFMF. The FCP1 homology domain maps to 56–223; that stretch reads SLVQRKTLVL…LSLLPMLDAL (168 aa).

The protein belongs to the dullard family.

It localises to the membrane. The enzyme catalyses O-phospho-L-seryl-[protein] + H2O = L-seryl-[protein] + phosphate. It carries out the reaction O-phospho-L-threonyl-[protein] + H2O = L-threonyl-[protein] + phosphate. Its function is as follows. Serine/threonine protein phosphatase that may dephosphorylate and activate lipin-like phosphatases. Lipins are phosphatidate phosphatases that catalyze the conversion of phosphatidic acid to diacylglycerol and control the metabolism of fatty acids at different levels. May indirectly modulate the lipid composition of nuclear and/or endoplasmic reticulum membranes and be required for proper nuclear membrane morphology and/or dynamics. May also indirectly regulate the production of lipid droplets and triacylglycerol. In Drosophila pseudoobscura pseudoobscura (Fruit fly), this protein is CTD nuclear envelope phosphatase 1 homolog (l(1)G0269).